A 335-amino-acid chain; its full sequence is Probable tRNA N6-adenosine threonylcarbamoyltransferase (335 aa).

The a divalent metal cation site is built by histidine 109, histidine 113, and tyrosine 130. Substrate contacts are provided by residues tyrosine 130–glycine 134, aspartate 162, glycine 177, glutamate 181, and asparagine 266. Aspartate 294 is a binding site for a divalent metal cation.

The protein belongs to the KAE1 / TsaD family. In terms of assembly, component of the EKC/KEOPS complex; the whole complex dimerizes. A divalent metal cation serves as cofactor.

Its subcellular location is the cytoplasm. It is found in the nucleus. It catalyses the reaction L-threonylcarbamoyladenylate + adenosine(37) in tRNA = N(6)-L-threonylcarbamoyladenosine(37) in tRNA + AMP + H(+). In terms of biological role, component of the EKC/KEOPS complex that is required for the formation of a threonylcarbamoyl group on adenosine at position 37 (t(6)A37) in tRNAs that read codons beginning with adenine. The complex is probably involved in the transfer of the threonylcarbamoyl moiety of threonylcarbamoyl-AMP (TC-AMP) to the N6 group of A37. Osgep likely plays a direct catalytic role in this reaction, but requires other protein(s) of the complex to fulfill this activity. This Nematostella vectensis (Starlet sea anemone) protein is Probable tRNA N6-adenosine threonylcarbamoyltransferase.